A 585-amino-acid polypeptide reads, in one-letter code: Lipoprotein LpqB (585 aa).

Positions 1–18 (MKRLLTVLVVGLVALVSG) are cleaved as a signal peptide. Cysteine 19 is lipidated: N-palmitoyl cysteine. Residue cysteine 19 is the site of S-diacylglycerol cysteine attachment. Positions 24–46 (SSSSPQAIGTVERPAPPSLPKPT) are disordered. Pro residues predominate over residues 37 to 46 (PAPPSLPKPT).

It belongs to the LpqB lipoprotein family. Interacts with MtrB, probably extracytoplasmically via its sensor domain.

The protein resides in the cell membrane. It is found in the secreted. Its subcellular location is the cell wall. In terms of biological role, may modulate activity of the MtrAB system in controlling homeostasis of the cell wall and cell division. The chain is Lipoprotein LpqB from Mycolicibacterium smegmatis (strain ATCC 700084 / mc(2)155) (Mycobacterium smegmatis).